A 325-amino-acid polypeptide reads, in one-letter code: Aldo-keto reductase family 1 member A1 (325 aa).

Alanine 2 bears the N-acetylalanine mark. Phosphoserine is present on serine 4. NADP(+) contacts are provided by residues 11–20, threonine 21, and tryptophan 22; that span reads GQKMPLIGLG. Serine 38 carries the phosphoserine modification. Aspartate 45 serves as a coordination point for NADP(+). Tyrosine 50 (proton donor) is an active-site residue. Residue lysine 127 is modified to N6-acetyllysine; alternate. Lysine 127 carries the post-translational modification N6-succinyllysine; alternate. At lysine 145 the chain carries N6-succinyllysine. Residues serine 162, asparagine 163, serine 211, leucine 213, serine 215, serine 216, lysine 263, serine 264, isoleucine 265, threonine 266, arginine 269, glutamine 272, and asparagine 273 each contribute to the NADP(+) site. At serine 211 the chain carries Phosphoserine.

This sequence belongs to the aldo/keto reductase family.

The protein localises to the cytoplasm. It is found in the cytosol. Its subcellular location is the apical cell membrane. It carries out the reaction a primary alcohol + NADP(+) = an aldehyde + NADPH + H(+). The catalysed reaction is L-gulonate + NADP(+) = aldehydo-D-glucuronate + NADPH + H(+). It catalyses the reaction L-gulono-1,4-lactone + NADP(+) = D-glucurono-3,6-lactone + NADPH + H(+). The enzyme catalyses allyl alcohol + NADP(+) = acrolein + NADPH + H(+). It carries out the reaction glycerol + NADP(+) = D-glyceraldehyde + NADPH + H(+). The catalysed reaction is glycerol + NADP(+) = L-glyceraldehyde + NADPH + H(+). It catalyses the reaction hydroxyacetone + NADP(+) = methylglyoxal + NADPH + H(+). The enzyme catalyses 3-deoxyfructose + NADP(+) = 3-deoxyglucosone + NADPH + H(+). It carries out the reaction (R)-mevalonate + NADP(+) = (R)-mevaldate + NADPH + H(+). The catalysed reaction is pyridine 3-methanol + NADP(+) = pyridine-3-carbaldehyde + NADPH + H(+). It catalyses the reaction S-nitroso-CoA + NADPH + H(+) = sulfinamide-CoA + NADP(+). The enzyme catalyses S-nitrosoglutathione + NADPH + H(+) = S-(hydroxysulfenamide)glutathione + NADP(+). Functionally, catalyzes the NADPH-dependent reduction of a wide variety of carbonyl-containing compounds to their corresponding alcohols. Displays enzymatic activity towards endogenous metabolites such as aromatic and aliphatic aldehydes, ketones, monosaccharides and bile acids, with a preference for negatively charged substrates, such as glucuronate and succinic semialdehyde. Functions as a detoxifiying enzyme by reducing a range of toxic aldehydes. Reduces methylglyoxal and 3-deoxyglucosone, which are present at elevated levels under hyperglycemic conditions and are cytotoxic. Involved also in the detoxification of lipid-derived aldehydes like acrolein. Plays a role in the activation of procarcinogens, such as polycyclic aromatic hydrocarbon trans-dihydrodiols, and in the metabolism of various xenobiotics and drugs. Also acts as an inhibitor of protein S-nitrosylation by mediating degradation of S-nitroso-coenzyme A (S-nitroso-CoA), a cofactor required to S-nitrosylate proteins. S-nitroso-CoA reductase activity is involved in reprogramming intermediary metabolism in renal proximal tubules, notably by inhibiting protein S-nitrosylation of isoform 2 of PKM (PKM2). Also acts as a S-nitroso-glutathione reductase by catalyzing the NADPH-dependent reduction of S-nitrosoglutathione. Displays no reductase activity towards retinoids. The chain is Aldo-keto reductase family 1 member A1 (AKR1A1) from Pongo abelii (Sumatran orangutan).